Consider the following 355-residue polypeptide: Agamous-like MADS-box protein AGL81 (355 aa).

The disordered stretch occupies residues 1–22 (MAIRSLPSSSRCSSSSSSSSYS). Residues 26–68 (TSLSNRLETIFKKASELCTLCDIEACVIYYGPDGELKTWPPER) form the MADS-box domain. The span at 162–174 (VESQKHKETKPDH) shows a compositional bias: basic and acidic residues. Residues 162–186 (VESQKHKETKPDHQSLASSSLNHQT) form a disordered region. Over residues 176–186 (SLASSSLNHQT) the composition is skewed to polar residues.

In terms of assembly, interacts with MEE14/CBP1.

The protein resides in the nucleus. In terms of biological role, probable transcription factor that may function in the maintenance of the proper function of the central cell in pollen tube attraction. The chain is Agamous-like MADS-box protein AGL81 from Arabidopsis thaliana (Mouse-ear cress).